The primary structure comprises 692 residues: DNA ligase (692 aa).

NAD(+)-binding positions include 35–39, 88–89, and Glu117; these read DLVYD and SL. The N6-AMP-lysine intermediate role is filled by Lys119. Residues Arg140, Glu176, Lys301, and Lys325 each contribute to the NAD(+) site. Residues Cys416, Cys419, Cys434, and Cys439 each contribute to the Zn(2+) site. One can recognise a BRCT domain in the interval 611–692; the sequence is LTNQSNSWAS…FDLIKNSKKT (82 aa).

It belongs to the NAD-dependent DNA ligase family. LigA subfamily. It depends on Mg(2+) as a cofactor. The cofactor is Mn(2+).

It carries out the reaction NAD(+) + (deoxyribonucleotide)n-3'-hydroxyl + 5'-phospho-(deoxyribonucleotide)m = (deoxyribonucleotide)n+m + AMP + beta-nicotinamide D-nucleotide.. Functionally, DNA ligase that catalyzes the formation of phosphodiester linkages between 5'-phosphoryl and 3'-hydroxyl groups in double-stranded DNA using NAD as a coenzyme and as the energy source for the reaction. It is essential for DNA replication and repair of damaged DNA. This Mesomycoplasma hyopneumoniae (strain J / ATCC 25934 / NCTC 10110) (Mycoplasma hyopneumoniae) protein is DNA ligase.